We begin with the raw amino-acid sequence, 1585 residues long: uncharacterized protein (1585 aa).

Positions 12–59 (DKISRKLRMIQGNAERLKRAANGPLIFEAEDRTERVMRQIDRSANRLT) form a coiled coil. 2 disordered regions span residues 586-627 (PKRT…SLPR) and 645-692 (IRRR…NPTR). Residues 618 to 627 (TATGPTSLPR) are compositionally biased toward polar residues. Residues 645–655 (IRRRRGKRVLG) are compositionally biased toward basic residues. Over residues 661–672 (NRMNPSDSSIAV) the composition is skewed to polar residues. Phosphoserine occurs at positions 970 and 972.

This sequence to B.subtilis XkdO.

This is an uncharacterized protein from Bacillus subtilis (strain 168).